The sequence spans 246 residues: NAD(P)H-quinone oxidoreductase subunit K (246 aa).

4 residues coordinate [4Fe-4S] cluster: cysteine 62, cysteine 63, cysteine 127, and cysteine 158.

The protein belongs to the complex I 20 kDa subunit family. As to quaternary structure, NDH-1 can be composed of about 15 different subunits; different subcomplexes with different compositions have been identified which probably have different functions. The cofactor is [4Fe-4S] cluster.

The protein localises to the cellular thylakoid membrane. It catalyses the reaction a plastoquinone + NADH + (n+1) H(+)(in) = a plastoquinol + NAD(+) + n H(+)(out). It carries out the reaction a plastoquinone + NADPH + (n+1) H(+)(in) = a plastoquinol + NADP(+) + n H(+)(out). Its function is as follows. NDH-1 shuttles electrons from an unknown electron donor, via FMN and iron-sulfur (Fe-S) centers, to quinones in the respiratory and/or the photosynthetic chain. The immediate electron acceptor for the enzyme in this species is believed to be plastoquinone. Couples the redox reaction to proton translocation, and thus conserves the redox energy in a proton gradient. Cyanobacterial NDH-1 also plays a role in inorganic carbon-concentration. The polypeptide is NAD(P)H-quinone oxidoreductase subunit K (Parasynechococcus marenigrum (strain WH8102)).